Reading from the N-terminus, the 254-residue chain is MKLLEGKTVLVTGASTGIGRAAAIGAAQHGADVAINYAHSDGPAQSCVAEIEALGQRAIAVKGDVADPQTAQDFVAKAVETFGKVDVMVSNAGICPFHAFLDMPVDVVERTFKVNLHGAYFMVQAAAQQMVRQGHGGSIVAVSSISALVGGEYQTHYTPTKAGVHSLMQSTAIALGKHGIRCNSVLPGTILTEINKDDLADQEKREYMEARTPLGRLGAPEDLAGPIVFLASDMAAYVTGAALLVDGGMYVNLQ.

NADP(+)-binding residues include Gly-13, Ser-15, Ile-18, Asp-64, Val-65, and Asn-91. Ser-144 serves as the catalytic Proton donor. Residues Ser-144, Ser-146, Gln-154, and Tyr-157 each contribute to the beta-L-rhamnose site. NADP(+) is bound by residues Tyr-157 and Lys-161. The active-site Proton acceptor is Tyr-157. Lys-161 (lowers pKa of active site Tyr) is an active-site residue. Thr-189 provides a ligand contact to beta-L-rhamnose. Residue Ile-190 coordinates NADP(+). Residue Asn-195 participates in beta-L-rhamnose binding.

It belongs to the short-chain dehydrogenases/reductases (SDR) family.

It carries out the reaction L-rhamnofuranose + NAD(+) = L-rhamnono-1,4-lactone + NADH + H(+). The catalysed reaction is L-rhamnofuranose + NADP(+) = L-rhamnono-1,4-lactone + NADPH + H(+). The protein operates within carbohydrate degradation; L-rhamnose degradation. Functionally, NAD(P)-dependent dehydrogenase that catalyzes the oxidation of L-rhamnose to L-rhamnono-1,4-lactone. Also shows high activity with L-lyxose and low activity with L-mannose. Can utilize either NAD(+) or NADP(+), with a slight preference for NADP(+). Catalyzes the first step in an alternative pathway for rhamnose utilization that does not involve phosphorylated intermediates. The sequence is that of L-rhamnose 1-dehydrogenase (NAD(P)(+)) from Sphingomonas sp. (strain SKA58).